The chain runs to 272 residues: Exosome complex component Rrp42 (272 aa).

Belongs to the RNase PH family. Rrp42 subfamily. In terms of assembly, component of the archaeal exosome complex. Forms a hexameric ring-like arrangement composed of 3 Rrp41-Rrp42 heterodimers. The hexameric ring associates with a trimer of Rrp4 and/or Csl4 subunits.

It localises to the cytoplasm. Its function is as follows. Non-catalytic component of the exosome, which is a complex involved in RNA degradation. Contributes to the structuring of the Rrp41 active site. This Thermococcus onnurineus (strain NA1) protein is Exosome complex component Rrp42.